Here is a 371-residue protein sequence, read N- to C-terminus: Flagellar P-ring protein (371 aa).

Positions 1 to 25 (MKMRACKWLLTLAVAFAATLSSAYA) are cleaved as a signal peptide.

This sequence belongs to the FlgI family. In terms of assembly, the basal body constitutes a major portion of the flagellar organelle and consists of four rings (L,P,S, and M) mounted on a central rod.

It localises to the periplasm. The protein resides in the bacterial flagellum basal body. In terms of biological role, assembles around the rod to form the L-ring and probably protects the motor/basal body from shearing forces during rotation. The polypeptide is Flagellar P-ring protein (Sinorhizobium medicae (strain WSM419) (Ensifer medicae)).